We begin with the raw amino-acid sequence, 189 residues long: Interferon alpha-6 (189 aa).

Positions 1–23 (MARLCAFLMVLAVLSYWPTCSLG) are cleaved as a signal peptide. 2 disulfides stabilise this stretch: cysteine 24–cysteine 122 and cysteine 52–cysteine 162. N-linked (GlcNAc...) asparagine glycosylation occurs at asparagine 101.

This sequence belongs to the alpha/beta interferon family.

The protein resides in the secreted. Its function is as follows. Produced by macrophages, IFN-alpha have antiviral activities. Interferon stimulates the production of two enzymes: a protein kinase and an oligoadenylate synthetase. This chain is Interferon alpha-6 (Ifna6), found in Mus musculus (Mouse).